The sequence spans 505 residues: ATP synthase subunit alpha (505 aa).

169-176 lines the ATP pocket; it reads GDRQIGKT.

The protein belongs to the ATPase alpha/beta chains family. F-type ATPases have 2 components, CF(1) - the catalytic core - and CF(0) - the membrane proton channel. CF(1) has five subunits: alpha(3), beta(3), gamma(1), delta(1), epsilon(1). CF(0) has three main subunits: a(1), b(2) and c(9-12). The alpha and beta chains form an alternating ring which encloses part of the gamma chain. CF(1) is attached to CF(0) by a central stalk formed by the gamma and epsilon chains, while a peripheral stalk is formed by the delta and b chains.

Its subcellular location is the cell inner membrane. The catalysed reaction is ATP + H2O + 4 H(+)(in) = ADP + phosphate + 5 H(+)(out). Produces ATP from ADP in the presence of a proton gradient across the membrane. The alpha chain is a regulatory subunit. The protein is ATP synthase subunit alpha of Desulfatibacillum aliphaticivorans.